We begin with the raw amino-acid sequence, 1238 residues long: Virulence sensor protein BvgS (1238 aa).

The signal sequence occupies residues 1-32 (MPAPHRLYPRSLICLAQALLVWALLAWAPAQA). The Cytoplasmic portion of the chain corresponds to 33–307 (SQELTLVGKA…REQQWMANHP (275 aa)). A helical transmembrane segment spans residues 308–331 (VVKVAVLNLFAPFTLFRTDEQFGG). At 332-541 (ISAAVLQLLQ…PRTWYAYRNE (210 aa)) the chain is on the periplasmic side. The chain crosses the membrane as a helical span at residues 542-563 (IYLLIGLGLLSALLFLSWIVYL). Residues 564 to 1238 (RRQIRQRKRA…LEQRPHQGQP (675 aa)) lie on the Cytoplasmic side of the membrane. The region spanning 580 to 651 (QLEFMRVLID…MHEFLLTRMA (72 aa)) is the PAS domain. The PAC domain maps to 652 to 708 (AEREPRFEDRDVTLHGRTRHVYQWTVPYGDSLGELKGIIGGWIDITERAELLRELHD). The region spanning 726–948 (TMSHEIRTPM…TVSVDLRLTM (223 aa)) is the Histidine kinase domain. Histidine 729 carries the post-translational modification Phosphohistidine; by autocatalysis. A Response regulatory domain is found at 974–1095 (RVLVVDDHKP…ALRQRLNEAA (122 aa)). Residue aspartate 1023 is modified to 4-aspartylphosphate. The HPt domain maps to 1133–1228 (DEALIRQLLE…AALETQLRAW (96 aa)). A Phosphohistidine modification is found at histidine 1172.

Post-translationally, activation requires a sequential transfer of a phosphate group from a His in the primary transmitter domain, to an Asp in the receiver domain and to a His in the secondary transmitter domain.

Its subcellular location is the cell inner membrane. The enzyme catalyses ATP + protein L-histidine = ADP + protein N-phospho-L-histidine.. Its function is as follows. Member of the two-component regulatory system BvgS/BvgA. Phosphorylates BvgA via a four-step phosphorelay in response to environmental signals. The sequence is that of Virulence sensor protein BvgS (bvgS) from Bordetella parapertussis (strain 12822 / ATCC BAA-587 / NCTC 13253).